A 261-amino-acid polypeptide reads, in one-letter code: Enolase-phosphatase E1 (261 aa).

Mg(2+) is bound by residues Asp-16 and Glu-18. Residues 153–154 (SS) and Lys-187 contribute to the substrate site. Residue Asp-212 participates in Mg(2+) binding.

Belongs to the HAD-like hydrolase superfamily. MasA/MtnC family. In terms of assembly, monomer. Mg(2+) serves as cofactor.

It localises to the cytoplasm. The protein resides in the nucleus. It catalyses the reaction 5-methylsulfanyl-2,3-dioxopentyl phosphate + H2O = 1,2-dihydroxy-5-(methylsulfanyl)pent-1-en-3-one + phosphate. Its pathway is amino-acid biosynthesis; L-methionine biosynthesis via salvage pathway; L-methionine from S-methyl-5-thio-alpha-D-ribose 1-phosphate: step 3/6. It participates in amino-acid biosynthesis; L-methionine biosynthesis via salvage pathway; L-methionine from S-methyl-5-thio-alpha-D-ribose 1-phosphate: step 4/6. Its function is as follows. Bifunctional enzyme that catalyzes the enolization of 2,3-diketo-5-methylthiopentyl-1-phosphate (DK-MTP-1-P) into the intermediate 2-hydroxy-3-keto-5-methylthiopentenyl-1-phosphate (HK-MTPenyl-1-P), which is then dephosphorylated to form the acireductone 1,2-dihydroxy-3-keto-5-methylthiopentene (DHK-MTPene). This chain is Enolase-phosphatase E1, found in Homo sapiens (Human).